A 324-amino-acid polypeptide reads, in one-letter code: FCS-Like Zinc finger 11 (324 aa).

The FLZ-type zinc finger occupies 266 to 309 (NFLGICNFCNKKLGGGDDIYMYREKSFCSEECRSEEMMIDEEDL).

It belongs to the FLZ family. As to quaternary structure, interacts with KIN10 and KIN11 via its FLZ-type zinc finger domain. Forms heterodimer with FLZ2 in vitro.

It is found in the cytoplasm. The protein resides in the nucleus. In terms of biological role, may act as an adapter to facilitate the interaction of SnRK1 complex with effector proteins, conferring tissue- and stimulus-type specific differences in the SnRK1 regulation pathway. The polypeptide is FCS-Like Zinc finger 11 (Arabidopsis thaliana (Mouse-ear cress)).